The chain runs to 226 residues: Cytidylate kinase (226 aa).

14–22 (GPAGAGKST) contacts ATP.

This sequence belongs to the cytidylate kinase family. Type 1 subfamily.

It is found in the cytoplasm. The catalysed reaction is CMP + ATP = CDP + ADP. It catalyses the reaction dCMP + ATP = dCDP + ADP. The chain is Cytidylate kinase from Symbiobacterium thermophilum (strain DSM 24528 / JCM 14929 / IAM 14863 / T).